The following is a 1807-amino-acid chain: Triacetic acid lactone synthase cle1 (1807 aa).

The Starter acyltransferase (SAT) domain occupies 107 to 280 (LAPLTVIIHI…ANVPVNGRYH (174 aa)). The region spanning 385 to 795 (DTSIAIIGAA…GNNTAIIICQ (411 aa)) is the Ketosynthase family 3 (KS3) domain. Active-site for beta-ketoacyl synthase activity residues include Cys-540, His-675, and His-718. Positions 919 to 1176 (SKAVYDSSYH…LGPCIWLEAG (258 aa)) constitute a Malonyl-CoA:ACP transacylase (MAT) domain. Positions 1272 to 1398 (PVIDGLISLE…GTVIVDDERT (127 aa)) are N-terminal hotdog fold. A PKS/mFAS DH domain is found at 1272 to 1573 (PVIDGLISLE…FIRTSTSALQ (302 aa)). His-1304 serves as the catalytic Proton acceptor; for dehydratase activity. Residues 1416-1573 (TVFSAPRGVA…FIRTSTSALQ (158 aa)) are C-terminal hotdog fold. The Proton donor; for dehydratase activity role is filled by Asp-1475. Residues 1605 to 1679 (ANVWSLTVNL…IICERITAQT (75 aa)) enclose the Carrier 1 domain. Ser-1639 carries the O-(pantetheine 4'-phosphoryl)serine modification. The segment at 1690–1720 (GNSTSNTTSSSSQCTPSSSFESDSDTQATEL) is disordered. The segment covering 1692–1710 (STSNTTSSSSQCTPSSSFE) has biased composition (low complexity). The region spanning 1721 to 1797 (SLSAPTMEKV…DLHALVMRRG (77 aa)) is the Carrier 2 domain. Ser-1757 is subject to O-(pantetheine 4'-phosphoryl)serine.

Requires pantetheine 4'-phosphate as cofactor.

The protein operates within secondary metabolite biosynthesis; terpenoid biosynthesis. Non-reducing polyketide synthase; part of the cluster A that mediates the biosynthesis of chevalone E and its oxidized derivatives that possess a unique five-membered lactone ring and can synergistically enhance the cytotoxicity of doxorubicin (DOX) in breast cancer cells. Within the pathway, cle1 takes part to the biosynthesis of the molecular scaffold via the synthesis the alpha-pyrone triacetic acid lactone (TAL) from one molecule of acetyl-CoA and two molecules of malonyl-CoA. The molecular scaffold is commonly biosynthesized by a series of enzymes including the non-reducing polyketide synthase (NR-PKS) cle1 that produces the alpha-pyrone triacetic acid lactone (TAL); The membrane-bound prenyltransferase cle5 that accepts TAL as its substrate to perform a C-3 geranylgeranylation reaction, in which the pathway-dedicated GGPS cle6 is required to provide GGPP, the other substrate of cle5; the FAD-dependent monooxygenase Cle3 that forms an (S)-epoxide ring at the terminal olefin of the geranylgeranyl group; and the terpene cyclase Cle7 that catalyzes the cyclization of the prenyl group that yields the pentacyclic pathway intermediate chevalone E. Chevalone E can derivatize into seven new oxidized analogs by the cytochrome P450 monooxygenases cle2 (acting at C-20) and cle4 (acting at C-11 and C-12). In Aspergillus versicolor, this protein is Triacetic acid lactone synthase cle1.